Here is a 493-residue protein sequence, read N- to C-terminus: UDP-glucose 6-dehydrogenase (493 aa).

Residues 11–16, aspartate 36, arginine 41, and 89–93 each bind NAD(+); these read GAGYVG and VNTPT. The disordered stretch occupies residues 88 to 110; sequence SVNTPTKTYGMGKGRAADLKYIE. Lysine 107 is modified (N6-acetyllysine). The segment at 129 to 135 is allosteric switch region; that stretch reads KSTVPVR. Residue 130-132 coordinates NAD(+); that stretch reads STV. Glutamate 161 (proton donor/acceptor) is an active-site residue. Substrate-binding positions include 161-165, 220-224, arginine 260, and 267-273; these read EFLAE, KLAAN, and KASVGFG. Glutamate 165 is an NAD(+) binding site. Lysine 220 acts as the Proton donor/acceptor in catalysis. Residue cysteine 276 is the Nucleophile of the active site. 276–279 lines the NAD(+) pocket; sequence CFQK. The important for formation of active hexamer structure stretch occupies residues 321-325; the sequence is SLFNT. 338 to 339 contacts substrate; it reads FK. Position 346 (arginine 346) interacts with NAD(+). A substrate-binding site is contributed by arginine 442. The segment at 466-493 is disordered; the sequence is VSSKRIPYTPGEIPKFSLQDPPNKKPKV. Phosphothreonine is present on threonine 474.

It belongs to the UDP-glucose/GDP-mannose dehydrogenase family. Homohexamer.

The enzyme catalyses UDP-alpha-D-glucose + 2 NAD(+) + H2O = UDP-alpha-D-glucuronate + 2 NADH + 3 H(+). It functions in the pathway nucleotide-sugar biosynthesis; UDP-alpha-D-glucuronate biosynthesis; UDP-alpha-D-glucuronate from UDP-alpha-D-glucose: step 1/1. Its activity is regulated as follows. UDP-alpha-D-xylose (UDX) acts as a feedback inhibitor. It binds at the same site as the substrate, but functions as allosteric inhibitor by triggering a conformation change that disrupts the active hexameric ring structure and gives rise to an inactive, horseshoe-shaped hexamer. Catalyzes the formation of UDP-alpha-D-glucuronate, a constituent of complex glycosaminoglycans. Required for the biosynthesis of chondroitin sulfate and heparan sulfate. Required for embryonic development via its role in the biosynthesis of glycosaminoglycans. Required for proper brain and neuronal development. This is UDP-glucose 6-dehydrogenase (Ugdh) from Rattus norvegicus (Rat).